The sequence spans 108 residues: Pyrimidine/purine nucleoside phosphorylase (108 aa).

Belongs to the nucleoside phosphorylase PpnP family.

It carries out the reaction a purine D-ribonucleoside + phosphate = a purine nucleobase + alpha-D-ribose 1-phosphate. The catalysed reaction is adenosine + phosphate = alpha-D-ribose 1-phosphate + adenine. The enzyme catalyses cytidine + phosphate = cytosine + alpha-D-ribose 1-phosphate. It catalyses the reaction guanosine + phosphate = alpha-D-ribose 1-phosphate + guanine. It carries out the reaction inosine + phosphate = alpha-D-ribose 1-phosphate + hypoxanthine. The catalysed reaction is thymidine + phosphate = 2-deoxy-alpha-D-ribose 1-phosphate + thymine. The enzyme catalyses uridine + phosphate = alpha-D-ribose 1-phosphate + uracil. It catalyses the reaction xanthosine + phosphate = alpha-D-ribose 1-phosphate + xanthine. Its function is as follows. Catalyzes the phosphorolysis of diverse nucleosides, yielding D-ribose 1-phosphate and the respective free bases. Can use uridine, adenosine, guanosine, cytidine, thymidine, inosine and xanthosine as substrates. Also catalyzes the reverse reactions. The protein is Pyrimidine/purine nucleoside phosphorylase of Polaromonas naphthalenivorans (strain CJ2).